A 90-amino-acid polypeptide reads, in one-letter code: Small ribosomal subunit protein bS20 (90 aa).

The interval 1–28 (MPNTSSASKRLRQNEKRRLLNRATRSNM) is disordered.

Belongs to the bacterial ribosomal protein bS20 family.

In terms of biological role, binds directly to 16S ribosomal RNA. This chain is Small ribosomal subunit protein bS20, found in Rhodopirellula baltica (strain DSM 10527 / NCIMB 13988 / SH1).